The chain runs to 1216 residues: MEKSKKDGHQAVLNEGEENELEVFGYHTQNLRRALCLVTAILTLGAVQLMFYWRPEWWVWTSCIPCPLQEADTILLRTTDEFRRYMRKKVFCLHLSTLKFPISKNPEEPLVADHHSVINQAVMKPELKLRCIQVQKIRYVWDFLKKRFQKVGLLEDSNSCFDIHHTFGLGLTNEEQEVRRLVCGPNSIEVEIQPIWKLLVKQVLNPFYVFQAFTLTLWLSQGYIEYSVAIIILTVISIVLSVYDLRQQSVKLHKLVEEHNKVQVTITVRDKGLQELESRLLVPGDILILPGKISLPCDAILIDGSCVVNEGMLTGESIPVTKTPLPQTENTMPWKSHSLEDYRKHVLFCGTEVIQVKPSAQGLVRAVVLQTGYNTAKGDLVRSILYPRPLNFKLYNDAFKFMVFLACVGVVGFFYALGVYMYHEVPPRETATMALILLSATVPPVLPAALTIGNVYAQKRLKKEKIFCISPQRINMCGQINLVCFDKTGTLTEDGLDLWGTVPTAGNCFQAVHSFASGEAVPWGPLCAAMTSCHSLILLDGTIQGDPLDLKMFEGTGWNMEDSQVASCKFGMADSSTVIKPGPKASQSPVDSITILRQFPFSSGLQRMSVIAQLAGDLHLHVYMKGAPEMVARFCRSETVPKNFSQELRNYTVQGFRVIALAHKTLKMERLSDMDHLAREKVESELAFLGLLIMENRLKKETRPVLKELSEARIRTVMVTGDNLQTAITVAKNSEMIPVGSQVVIVEANEPGDLVPASVTWQLVGTQEPGSGKKDTYIDIGNSSVPAGKGYHFAMSGKSYQVLFHHFYSMLPQILVNGTIFARMSPGQKSSLVEEFQKLNYYVGMCGDGANDCGALKMAHAGISLSEQEASVASPFTSKTANIECVPHLIREGRAALVSSFGVFKYLTMYGIIQFIGTSLLYWQLQLFGNYQYLLQDVAITLMVSLTMSINHAYPKLAPYRPAGQLLSPQLLLSVFMNSCFTCIVQVCTFLTVKQQPWYCEVYKYSECFLVNQSNLSANVSLDRNWTGNATLVPASVLSFEGTTLWPIVTFNCISAAFIFSKGKPFRKPIYANYLFSLLLASAAGLTIFILFCDFQDLYRKMEFIPTPTSWRVSILIAAFVQFCVAFFVEDAVLQNRELWLFIKKEFGFYSKSQYRILQRKLAEDSTWPPVNRTDYAVNGKNGFYVNRAYESPEEVPKGKLKLEEQASEQHFWTRL.

5 helical membrane-spanning segments follow: residues 33–53 (RALC…MFYW), 198–218 (LLVK…LTLW), 222–242 (GYIE…VLSV), 401–421 (FMVF…GVYM), and 433–453 (MALI…LTIG). The active-site 4-aspartylphosphate intermediate is Asp-486. Residues Asn-650 and Asn-817 are each glycosylated (N-linked (GlcNAc...) asparagine). The Mg(2+) site is built by Asp-848 and Asp-852. Transmembrane regions (helical) follow at residues 896–916 (ALVS…IQFI), 933–950 (YLLQ…TMSI), 971–991 (LLLS…CTFL), 1040–1060 (FEGT…AFIF), 1075–1095 (LFSL…FCDF), and 1113–1133 (VSIL…EDAV).

Belongs to the cation transport ATPase (P-type) (TC 3.A.3) family. Type V subfamily. As to expression, specifically expressed in brain and stomach.

Its subcellular location is the membrane. The catalysed reaction is ATP + H2O = ADP + phosphate + H(+). In Mus musculus (Mouse), this protein is Probable cation-transporting ATPase 13A5 (Atp13a5).